The chain runs to 510 residues: Archaeosine synthase subunit alpha (510 aa).

Positions 427–510 (LGKFTINKAS…LKKGIAVKVR (84 aa)) constitute a PUA domain.

Belongs to the archaeosine synthase type 1 family. Forms a robust complex with the archaeosine synthase beta subunit RaSEA, likely an alpha(2)beta(2) heterotetrameric structure. Formation of this complex highly increases lysine transfer activity.

It carries out the reaction 7-cyano-7-carbaguanosine(15) in tRNA + L-lysine = 7-N-[(5S)-5-amino-5-carboxypentyl]formamidino-7-deazaguanosine(15) in tRNA. The protein operates within tRNA modification; archaeosine-tRNA biosynthesis. Functionally, functions in the biosynthesis of archaeosine, a modified nucleoside present in the dihydrouridine loop (D-loop) of archaeal tRNAs. Catalyzes the addition of L-lysine to the cyano group of 7-cyano-7-deazaguanine (preQ0)-modified tRNAs at position 15, to generate q0kN15-tRNA, a q0N lysine adduct identified as 7-N-[(5S)-5-amino-5-carboxypentyl]formamidino-7-deazaguanosine. In Thermoplasma acidophilum (strain ATCC 25905 / DSM 1728 / JCM 9062 / NBRC 15155 / AMRC-C165), this protein is Archaeosine synthase subunit alpha.